The primary structure comprises 285 residues: Hypersensitive-induced reaction 1 protein (285 aa).

Residue Gly-2 is the site of N-myristoyl glycine attachment. A coiled-coil region spans residues 118–190; it reads FEQKNEIAKS…EKILQIKRAE (73 aa).

As to quaternary structure, homo- and heterodimer. Interacts with LRR1 (via LRR domain). Constitutively expressed in stems, roots and flowers, but not in leaves and fruits.

Its function is as follows. Positive regulator of hypersensitive response (HR)-like cell death. May be involved in potassium ion channel regulation. In Capsicum annuum (Capsicum pepper), this protein is Hypersensitive-induced reaction 1 protein.